The sequence spans 183 residues: Phosphinothricin N-acetyltransferase (183 aa).

Positions 8–169 (VEIRPATAAD…DVGFWQRDFE (162 aa)) constitute an N-acetyltransferase domain. Residues 91–93 (VYV), 99–104 (RLGLGS), and N130 contribute to the acetyl-CoA site.

The protein belongs to the acetyltransferase family. PAT/BAR subfamily.

It catalyses the reaction phosphinothricin + acetyl-CoA = N-acetylphosphinothricin + CoA + H(+). Its function is as follows. Inactivates phosphinothricin (PPT) by transfer of an acetyl group from acetyl CoA. This enzyme is an effector of phosphinothricin tripeptide (PTT or bialaphos) resistance. The sequence is that of Phosphinothricin N-acetyltransferase from Streptomyces viridochromogenes (strain DSM 40736 / JCM 4977 / BCRC 1201 / Tue 494).